A 329-amino-acid polypeptide reads, in one-letter code: GTPase Obg (329 aa).

Residues 1 to 159 form the Obg domain; the sequence is MQFIDQARIT…WFLQLELKLL (159 aa). Positions 160–328 constitute an OBG-type G domain; the sequence is AEVGIIGLPN…LLAQVWKELG (169 aa). ATP contacts are provided by residues 166–173, 191–195, 213–216, 280–283, and 309–311; these read GLPNAGKS, FTTLV, DIPG, NKQE, and SAA. Positions 173 and 193 each coordinate Mg(2+).

It belongs to the TRAFAC class OBG-HflX-like GTPase superfamily. OBG GTPase family. As to quaternary structure, monomer. It depends on Mg(2+) as a cofactor.

The protein resides in the cytoplasm. Its function is as follows. An essential GTPase which binds GTP, GDP and possibly (p)ppGpp with moderate affinity, with high nucleotide exchange rates and a fairly low GTP hydrolysis rate. Plays a role in control of the cell cycle, stress response, ribosome biogenesis and in those bacteria that undergo differentiation, in morphogenesis control. The sequence is that of GTPase Obg from Prochlorococcus marinus (strain MIT 9313).